The sequence spans 157 residues: NudC domain-containing protein 2 (157 aa).

S2 bears the N-acetylserine mark. The region spanning 14–104 (CGTPWGQWYQ…DAANCWTSLL (91 aa)) is the CS domain. The disordered stretch occupies residues 134 to 157 (FDFSGAEISGNYTKGGPDFSNLEK). A Phosphoserine modification is found at S142. Y145 carries the phosphotyrosine modification.

Interacts with LIS1.

Its subcellular location is the chromosome. It localises to the centromere. It is found in the kinetochore. The protein resides in the cytoplasm. The protein localises to the cytoskeleton. Its subcellular location is the microtubule organizing center. It localises to the centrosome. It is found in the spindle pole. May regulate the LIS1/dynein pathway by stabilizing LIS1 with Hsp90 chaperone. This chain is NudC domain-containing protein 2 (Nudcd2), found in Mus musculus (Mouse).